Here is a 259-residue protein sequence, read N- to C-terminus: 5'-nucleotidase SurE (259 aa).

A divalent metal cation-binding residues include D8, D9, S39, and N96.

Belongs to the SurE nucleotidase family. A divalent metal cation serves as cofactor.

The protein localises to the cytoplasm. The enzyme catalyses a ribonucleoside 5'-phosphate + H2O = a ribonucleoside + phosphate. In terms of biological role, nucleotidase that shows phosphatase activity on nucleoside 5'-monophosphates. The protein is 5'-nucleotidase SurE of Pelotomaculum thermopropionicum (strain DSM 13744 / JCM 10971 / SI).